Reading from the N-terminus, the 329-residue chain is Fructose-1,6-bisphosphatase class 1 (329 aa).

Mg(2+)-binding residues include glutamate 84, aspartate 103, leucine 105, and aspartate 106. Residues 106 to 109 (DGSS), asparagine 196, and lysine 262 contribute to the substrate site. A Mg(2+)-binding site is contributed by glutamate 268.

Belongs to the FBPase class 1 family. Homotetramer. It depends on Mg(2+) as a cofactor.

It localises to the cytoplasm. It catalyses the reaction beta-D-fructose 1,6-bisphosphate + H2O = beta-D-fructose 6-phosphate + phosphate. It functions in the pathway carbohydrate biosynthesis; gluconeogenesis. The sequence is that of Fructose-1,6-bisphosphatase class 1 from Shewanella sediminis (strain HAW-EB3).